A 69-amino-acid chain; its full sequence is U-Asilidin(12)-Dg3a (69 aa).

An N-terminal signal peptide occupies residues 1–19 (MRFLNIFLFFAAIIAFATA). A propeptide spanning residues 20-33 (SQVFEEDEIDMEPR) is cleaved from the precursor. 3 cysteine pairs are disulfide-bonded: C36-C59, C45-C65, and C49-C67.

Belongs to the asilidin-12 family. Expressed by the venom gland.

It localises to the secreted. Functionally, moderately increases Kv11.1/KCNH2/ERG1 currents and shifts the voltage-dependence of the channel activation to hyperpolarised potentials. In vivo, induces neurotoxic effects when injected into insects (tested on L.cuprina and A.domesticus). The protein is U-Asilidin(12)-Dg3a of Dolopus genitalis (Giant Australian assassin fly).